The primary structure comprises 151 residues: Transcriptional regulator MraZ (151 aa).

2 SpoVT-AbrB domains span residues 5–52 and 81–124; these read ATAV…PLMN and ATEC…SDVE.

The protein belongs to the MraZ family. Forms oligomers.

The protein localises to the cytoplasm. It is found in the nucleoid. The sequence is that of Transcriptional regulator MraZ from Haemophilus influenzae (strain PittGG).